Consider the following 147-residue polypeptide: MAIERTLSIIKPDGVEKGIIGKIIGRFEEKGLKPVAIRLTQLSKAEAEGFYAVHKARPFFGDLVKFMTSGPVVLMVLEGENAVARNREIMGATDPKKADAGTIRKDFATDIEKNTVHGSDSVENAKIEVSYFFPEVQVHAYEWKKLA.

Residues lysine 11, phenylalanine 59, arginine 87, threonine 93, arginine 104, and asparagine 114 each contribute to the ATP site. Residue histidine 117 is the Pros-phosphohistidine intermediate of the active site.

This sequence belongs to the NDK family. In terms of assembly, homotetramer. The cofactor is Mg(2+).

It localises to the cytoplasm. It catalyses the reaction a 2'-deoxyribonucleoside 5'-diphosphate + ATP = a 2'-deoxyribonucleoside 5'-triphosphate + ADP. The enzyme catalyses a ribonucleoside 5'-diphosphate + ATP = a ribonucleoside 5'-triphosphate + ADP. Its function is as follows. Major role in the synthesis of nucleoside triphosphates other than ATP. The ATP gamma phosphate is transferred to the NDP beta phosphate via a ping-pong mechanism, using a phosphorylated active-site intermediate. In Anaeromyxobacter dehalogenans (strain 2CP-1 / ATCC BAA-258), this protein is Nucleoside diphosphate kinase.